Reading from the N-terminus, the 392-residue chain is MIIKPKIRGFICTNSHPVGCAENVKRQIEFVRNKPAITNGPKNVLVIGCSTGYGLASRITAAFGSEAHTLGVCFEKEPTEKKTATAGWYNTAAFHQEANKAGLAFHSINGDAFSDEIKQESIDYIKQNMGKIDLVVYSLASPKRKDPDSGEVYSSVLKPIGKQYTTKTYNTDKDQVHEVTLDPATDEDIANTVKVMGGEDWERWVKALHNAGVLAENCQTTAYTYIGKKLTLPIYGHATIGRAKEDLDRAASELVAECDDLNLKAYVSSLKALVTQASSAIPVMPLYISLIYKVMKEEGTHEGCIEQIYRLFTEGLYNSNPELDEAGRLHMDGYETNDKTQAKIEALWEQVTQDNFHQLADYEGYHQEFLHLFGFGFDNVDYDADIDPKVNW.

NAD(+) contacts are provided by residues 48-53 (GCSTGY), 74-75 (FE), 111-112 (DA), and 139-140 (LA). Tyr225 is a binding site for substrate. Tyr235 functions as the Proton donor in the catalytic mechanism. Residues Lys244 and 273–275 (LVT) each bind NAD(+).

The protein belongs to the TER reductase family. In terms of assembly, monomer.

The enzyme catalyses a 2,3-saturated acyl-[ACP] + NAD(+) = a (2E)-enoyl-[ACP] + NADH + H(+). It functions in the pathway lipid metabolism; fatty acid biosynthesis. In terms of biological role, involved in the final reduction of the elongation cycle of fatty acid synthesis (FAS II). Catalyzes the reduction of a carbon-carbon double bond in an enoyl moiety that is covalently linked to an acyl carrier protein (ACP). In Idiomarina loihiensis (strain ATCC BAA-735 / DSM 15497 / L2-TR), this protein is Enoyl-[acyl-carrier-protein] reductase [NADH].